The chain runs to 415 residues: Diaminopimelate decarboxylase (415 aa).

Lysine 60 is subject to N6-(pyridoxal phosphate)lysine. Residues glycine 239 and 274 to 277 each bind pyridoxal 5'-phosphate; that span reads EPGR. Residues arginine 277, arginine 313, and tyrosine 317 each coordinate substrate. Cysteine 344 functions as the Proton donor in the catalytic mechanism. Residues glutamate 345 and tyrosine 372 each coordinate substrate. A pyridoxal 5'-phosphate-binding site is contributed by tyrosine 372.

The protein belongs to the Orn/Lys/Arg decarboxylase class-II family. LysA subfamily. In terms of assembly, homodimer. Pyridoxal 5'-phosphate serves as cofactor.

The catalysed reaction is meso-2,6-diaminopimelate + H(+) = L-lysine + CO2. Its pathway is amino-acid biosynthesis; L-lysine biosynthesis via DAP pathway; L-lysine from DL-2,6-diaminopimelate: step 1/1. Its function is as follows. Specifically catalyzes the decarboxylation of meso-diaminopimelate (meso-DAP) to L-lysine. The chain is Diaminopimelate decarboxylase from Haemophilus influenzae (strain ATCC 51907 / DSM 11121 / KW20 / Rd).